The primary structure comprises 207 residues: uncharacterized protein (207 aa).

G51 and D72 together coordinate S-adenosyl-L-methionine.

The protein belongs to the methyltransferase superfamily. YrrT family.

Functionally, could be a S-adenosyl-L-methionine-dependent methyltransferase. This is an uncharacterized protein from Staphylococcus carnosus (strain TM300).